We begin with the raw amino-acid sequence, 246 residues long: tRNA (guanine-N(7)-)-methyltransferase (246 aa).

S-adenosyl-L-methionine contacts are provided by glutamate 77, glutamate 102, aspartate 129, and aspartate 152. The active site involves aspartate 152. Substrate contacts are provided by residues lysine 156, aspartate 188, and 225 to 228 (TKFE).

It belongs to the class I-like SAM-binding methyltransferase superfamily. TrmB family.

The enzyme catalyses guanosine(46) in tRNA + S-adenosyl-L-methionine = N(7)-methylguanosine(46) in tRNA + S-adenosyl-L-homocysteine. It functions in the pathway tRNA modification; N(7)-methylguanine-tRNA biosynthesis. In terms of biological role, catalyzes the formation of N(7)-methylguanine at position 46 (m7G46) in tRNA. This Haemophilus influenzae (strain ATCC 51907 / DSM 11121 / KW20 / Rd) protein is tRNA (guanine-N(7)-)-methyltransferase.